The chain runs to 117 residues: MDWIWRILFLVGAATGAHSQMQLVQSGPEVKKPGTSVKVSCKASGFTFTSSAVQWVRQARGQRLEWIGWIVVGSGNTNYAQKFQERVTITRDMSTSTAYMELSSLRSEDTAVYYCAA.

A signal peptide spans 1–19; sequence MDWIWRILFLVGAATGAHS. A framework-1 region spans residues 20-44; it reads QMQLVQSGPEVKKPGTSVKVSCKAS. In terms of domain architecture, Ig-like spans 20-117; that stretch reads QMQLVQSGPE…EDTAVYYCAA (98 aa). A disulfide bridge links Cys41 with Cys115. The complementarity-determining-1 stretch occupies residues 45-52; sequence GFTFTSSA. A framework-2 region spans residues 53–69; the sequence is VQWVRQARGQRLEWIGW. Residues 70–77 are complementarity-determining-2; the sequence is IVVGSGNT. The interval 78 to 115 is framework-3; it reads NYAQKFQERVTITRDMSTSTAYMELSSLRSEDTAVYYC. Residues 116-117 are complementarity-determining-3; that stretch reads AA.

Immunoglobulins are composed of two identical heavy chains and two identical light chains; disulfide-linked.

The protein resides in the secreted. It is found in the cell membrane. In terms of biological role, v region of the variable domain of immunoglobulin heavy chains that participates in the antigen recognition. Immunoglobulins, also known as antibodies, are membrane-bound or secreted glycoproteins produced by B lymphocytes. In the recognition phase of humoral immunity, the membrane-bound immunoglobulins serve as receptors which, upon binding of a specific antigen, trigger the clonal expansion and differentiation of B lymphocytes into immunoglobulins-secreting plasma cells. Secreted immunoglobulins mediate the effector phase of humoral immunity, which results in the elimination of bound antigens. The antigen binding site is formed by the variable domain of one heavy chain, together with that of its associated light chain. Thus, each immunoglobulin has two antigen binding sites with remarkable affinity for a particular antigen. The variable domains are assembled by a process called V-(D)-J rearrangement and can then be subjected to somatic hypermutations which, after exposure to antigen and selection, allow affinity maturation for a particular antigen. This is Immunoglobulin heavy variable 1-58 from Homo sapiens (Human).